The following is a 144-amino-acid chain: Ribosomal RNA large subunit methyltransferase H (144 aa).

S-adenosyl-L-methionine is bound by residues Leu63, Gly92, and 111-116 (LSPLTF).

The protein belongs to the RNA methyltransferase RlmH family. In terms of assembly, homodimer.

Its subcellular location is the cytoplasm. It carries out the reaction pseudouridine(1915) in 23S rRNA + S-adenosyl-L-methionine = N(3)-methylpseudouridine(1915) in 23S rRNA + S-adenosyl-L-homocysteine + H(+). Its function is as follows. Specifically methylates the pseudouridine at position 1915 (m3Psi1915) in 23S rRNA. In Synechococcus sp. (strain CC9902), this protein is Ribosomal RNA large subunit methyltransferase H.